A 123-amino-acid polypeptide reads, in one-letter code: Ribosome-binding factor A (123 aa).

Belongs to the RbfA family. In terms of assembly, monomer. Binds 30S ribosomal subunits, but not 50S ribosomal subunits or 70S ribosomes.

The protein localises to the cytoplasm. Its function is as follows. One of several proteins that assist in the late maturation steps of the functional core of the 30S ribosomal subunit. Associates with free 30S ribosomal subunits (but not with 30S subunits that are part of 70S ribosomes or polysomes). Required for efficient processing of 16S rRNA. May interact with the 5'-terminal helix region of 16S rRNA. The chain is Ribosome-binding factor A from Legionella pneumophila (strain Paris).